Here is a 416-residue protein sequence, read N- to C-terminus: Formyl-CoA:oxalate CoA-transferase (416 aa).

Residues 17–18, arginine 38, 72–75, 96–98, histidine 104, and 137–140 each bind CoA; these read QS, LNTK, NFH, and KAYE. The Nucleophile role is filled by aspartate 169. 248-250 is a substrate binding site; it reads GGQ. 273–275 is a binding site for CoA; the sequence is QEQ.

This sequence belongs to the CoA-transferase III family. Frc subfamily. Homodimer.

It carries out the reaction formyl-CoA + oxalate = oxalyl-CoA + formate. It functions in the pathway metabolic intermediate degradation; oxalate degradation; CO(2) and formate from oxalate: step 1/2. In terms of biological role, involved in the catabolism of oxalate and in the adapatation to low pH via the induction of the oxalate-dependent acid tolerance response (ATR). Catalyzes the transfer of the CoA moiety from formyl-CoA to oxalate. In Escherichia coli (strain ATCC 8739 / DSM 1576 / NBRC 3972 / NCIMB 8545 / WDCM 00012 / Crooks), this protein is Formyl-CoA:oxalate CoA-transferase.